Here is a 261-residue protein sequence, read N- to C-terminus: 1,6-dihydroxycyclohexa-2,4-diene-1-carboxylate dehydrogenase (261 aa).

13–37 is a binding site for NAD(+); sequence IVTGAAQGIGRGVALRIAQEGGCLI. Substrate is bound at residue serine 145. The Proton acceptor role is filled by tyrosine 156.

Belongs to the short-chain dehydrogenases/reductases (SDR) family. Homodimer.

It catalyses the reaction (1R,6S)-1,6-dihydroxycyclohexa-2,4-diene-1-carboxylate + NAD(+) = catechol + CO2 + NADH. It participates in aromatic compound metabolism; benzoate degradation via hydroxylation; catechol from benzoate: step 2/2. Its function is as follows. Degradation of 2-hydro-1,2-dihydroxy benzoate (DHB) to catechol. The protein is 1,6-dihydroxycyclohexa-2,4-diene-1-carboxylate dehydrogenase (benD) of Acinetobacter baylyi (strain ATCC 33305 / BD413 / ADP1).